The sequence spans 815 residues: Bifunctional purine biosynthetic protein purD (815 aa).

A GARS region spans residues 6–452 (NILVIGSGSR…YRKDIGQKAL (447 aa)). One can recognise an ATP-grasp domain in the interval 113 to 343 (KDFMARNNIP…LFEIVLACIE (231 aa)). Position 139–200 (139–200 (IESLNYKIVL…EEFLDGEECS (62 aa))) interacts with ATP. Mg(2+) is bound by residues Glu313 and Asn315. An AIRS region spans residues 469 to 801 (VSYSESGVDI…KVYKIGKIIN (333 aa)).

In the N-terminal section; belongs to the GARS family. This sequence in the C-terminal section; belongs to the AIR synthase family. Requires Mg(2+) as cofactor. Mn(2+) serves as cofactor.

The protein localises to the cytoplasm. The protein resides in the cytosol. The catalysed reaction is 5-phospho-beta-D-ribosylamine + glycine + ATP = N(1)-(5-phospho-beta-D-ribosyl)glycinamide + ADP + phosphate + H(+). It catalyses the reaction 2-formamido-N(1)-(5-O-phospho-beta-D-ribosyl)acetamidine + ATP = 5-amino-1-(5-phospho-beta-D-ribosyl)imidazole + ADP + phosphate + H(+). It functions in the pathway purine metabolism; IMP biosynthesis via de novo pathway; 5-amino-1-(5-phospho-D-ribosyl)imidazole from N(2)-formyl-N(1)-(5-phospho-D-ribosyl)glycinamide: step 2/2. Its pathway is purine metabolism; IMP biosynthesis via de novo pathway; N(1)-(5-phospho-D-ribosyl)glycinamide from 5-phospho-alpha-D-ribose 1-diphosphate: step 2/2. Functionally, catalyzes the second and fifth step in the 'de novo' purine biosynthesis pathway; contains phosphoribosylamine--glycine ligase (GARS) and phosphoribosylformylglycinamidine cyclo-ligase (AIRS) activities. The polypeptide is Bifunctional purine biosynthetic protein purD (purD) (Dictyostelium discoideum (Social amoeba)).